The following is a 356-amino-acid chain: Golgi-resident adenosine 3',5'-bisphosphate 3'-phosphatase (356 aa).

An N-acetylmethionine modification is found at M1. The Cytoplasmic segment spans residues 1–12 (MAPMGIRLSPLG). A helical transmembrane segment spans residues 13-33 (VAVFFLLGLGVLYHLYSGFLA). Over 34–356 (GRFSLFGLGS…KLPDLEKSGH (323 aa)) the chain is Lumenal. The interval 84–104 (ESNVLHEKSKGKTREGADDKM) is disordered. D108 acts as the Proton acceptor in catalysis. Mg(2+) contacts are provided by E131, D172, L174, and D175. The active-site Proton acceptor is the T177. 2 residues coordinate AMP: S240 and H243. An N-linked (GlcNAc...) asparagine glycan is attached at N257. G266 and K270 together coordinate AMP. D298 lines the Mg(2+) pocket.

It belongs to the inositol monophosphatase superfamily. Mg(2+) is required as a cofactor. In terms of processing, N-glycosylated. Contains N-linked glycan resistant to endoglycosydase H.

Its subcellular location is the golgi apparatus. The protein resides in the trans-Golgi network membrane. The enzyme catalyses adenosine 3',5'-bisphosphate + H2O = AMP + phosphate. The protein operates within sulfur metabolism. Its activity is regulated as follows. Strongly inhibited by lithium. Its function is as follows. Exhibits 3'-nucleotidase activity toward adenosine 3',5'-bisphosphate (PAP), namely hydrolyzes adenosine 3',5'-bisphosphate into adenosine 5'-monophosphate (AMP) and a phosphate. May play a role in the formation of skeletal elements derived through endochondral ossification, possibly by clearing adenosine 3',5'-bisphosphate produced by Golgi sulfotransferases during glycosaminoglycan sulfation. Has no activity toward 3'-phosphoadenosine 5'-phosphosulfate (PAPS) or inositol phosphate (IP) substrates including I(1)P, I(1,4)P2, I(1,3,4)P3, I(1,4,5)P3 and I(1,3,4,5)P4. The chain is Golgi-resident adenosine 3',5'-bisphosphate 3'-phosphatase from Mus musculus (Mouse).